We begin with the raw amino-acid sequence, 207 residues long: Claudin-11 (207 aa).

Position 1 (Met1) is a topological domain, cytoplasmic. Residues 2-22 (VATCLQVVGFVTSFVGWIGII) traverse the membrane as a helical segment. The Extracellular portion of the chain corresponds to 23 to 82 (VTTSTNDWVVTCSYTIPTCRKMDELGSKGLWADCVMATGLYHCKPLVDILILPGYVQACR). A helical membrane pass occupies residues 83–103 (ALMIAASVLGLPAILLLLTVL). The Cytoplasmic portion of the chain corresponds to 104 to 122 (PCIRMGHEPGVAKYRRAQL). A helical transmembrane segment spans residues 123-143 (AGVLLILLALCAIVATIWFPV). Over 144-157 (CAHREITIVSFGYS) the chain is Extracellular. Residues 158-178 (LYAGWIGAVMCLVGGCVIVCC) traverse the membrane as a helical segment. Residues 179-207 (SGDAQSFGENRFYYSSGSSSPTHAKSAHV) are Cytoplasmic-facing. Phosphoserine is present on residues Ser193, Ser194, Ser197, and Ser198.

Belongs to the claudin family. Interacts with tetraspanin-3/TSPAN3. Interacts with OCLN.

It is found in the cell junction. The protein localises to the tight junction. It localises to the cell membrane. Plays a major role in tight junction-specific obliteration of the intercellular space, through calcium-independent cell-adhesion activity. This Mus musculus (Mouse) protein is Claudin-11 (Cldn11).